The following is a 250-amino-acid chain: 5'-nucleotidase SurE (250 aa).

A divalent metal cation is bound by residues Asp-8, Asp-9, Ser-39, and Asn-92.

This sequence belongs to the SurE nucleotidase family. A divalent metal cation is required as a cofactor.

The protein localises to the cytoplasm. It catalyses the reaction a ribonucleoside 5'-phosphate + H2O = a ribonucleoside + phosphate. Functionally, nucleotidase that shows phosphatase activity on nucleoside 5'-monophosphates. This chain is 5'-nucleotidase SurE, found in Vibrio cholerae serotype O1 (strain ATCC 39315 / El Tor Inaba N16961).